Consider the following 119-residue polypeptide: NADH-quinone oxidoreductase subunit A (119 aa).

A run of 3 helical transmembrane segments spans residues 7-27 (FPVL…MTIG), 63-83 (LIAI…PWGV), and 88-108 (IGWP…VGFV).

Belongs to the complex I subunit 3 family. In terms of assembly, NDH-1 is composed of 14 different subunits. Subunits NuoA, H, J, K, L, M, N constitute the membrane sector of the complex.

Its subcellular location is the cell inner membrane. The catalysed reaction is a quinone + NADH + 5 H(+)(in) = a quinol + NAD(+) + 4 H(+)(out). NDH-1 shuttles electrons from NADH, via FMN and iron-sulfur (Fe-S) centers, to quinones in the respiratory chain. The immediate electron acceptor for the enzyme in this species is believed to be ubiquinone. Couples the redox reaction to proton translocation (for every two electrons transferred, four hydrogen ions are translocated across the cytoplasmic membrane), and thus conserves the redox energy in a proton gradient. In Ralstonia pickettii (strain 12J), this protein is NADH-quinone oxidoreductase subunit A.